The primary structure comprises 773 residues: 5-methyltetrahydropteroyltriglutamate--homocysteine methyltransferase (773 aa).

Residues R16–K19 and K116 contribute to the 5-methyltetrahydropteroyltri-L-glutamate site. L-homocysteine-binding positions include I437–S439 and E490. L-methionine contacts are provided by residues I437–S439 and E490. Residues R521–C522 and W567 contribute to the 5-methyltetrahydropteroyltri-L-glutamate site. Position 605 (D605) interacts with L-homocysteine. Residue D605 coordinates L-methionine. E611 lines the 5-methyltetrahydropteroyltri-L-glutamate pocket. Residues H647, C649, and E671 each coordinate Zn(2+). H700 (proton donor) is an active-site residue. C732 is a binding site for Zn(2+).

The protein belongs to the vitamin-B12 independent methionine synthase family. It depends on Zn(2+) as a cofactor.

The catalysed reaction is 5-methyltetrahydropteroyltri-L-glutamate + L-homocysteine = tetrahydropteroyltri-L-glutamate + L-methionine. The protein operates within amino-acid biosynthesis; L-methionine biosynthesis via de novo pathway; L-methionine from L-homocysteine (MetE route): step 1/1. Functionally, catalyzes the transfer of a methyl group from 5-methyltetrahydrofolate to homocysteine resulting in methionine formation. The protein is 5-methyltetrahydropteroyltriglutamate--homocysteine methyltransferase of Alkalilimnicola ehrlichii (strain ATCC BAA-1101 / DSM 17681 / MLHE-1).